The following is a 341-amino-acid chain: Protein P3 (341 aa).

The disordered stretch occupies residues arginine 46–glutamate 175. Over residues lysine 97–asparagine 116 the composition is skewed to basic residues. Positions serine 142–serine 152 are enriched in low complexity.

The protein belongs to the nepovirus protein P3 family.

In Vitis rupestris (Grape), this protein is Protein P3.